The chain runs to 113 residues: U11-theraphotoxin-Hhn1f (113 aa).

Positions 1–21 are cleaved as a signal peptide; the sequence is MNTVRVTFLLVFVLAVSLGQA. Residues 22–74 constitute a propeptide that is removed on maturation; that stretch reads DKDENRMEMQEKTEQGKSYLDFAENLLLQKLEELEAKLLEEDSEESRNSRQKR. Residues 61–83 form a disordered region; sequence EEDSEESRNSRQKRCIGEGVPCD. Cystine bridges form between Cys75-Cys90, Cys82-Cys95, and Cys89-Cys110.

This sequence belongs to the neurotoxin 14 (magi-1) family. 01 (HNTX-16) subfamily. As to expression, expressed by the venom gland.

The protein localises to the secreted. Functionally, probable ion channel inhibitor. This is U11-theraphotoxin-Hhn1f from Cyriopagopus hainanus (Chinese bird spider).